We begin with the raw amino-acid sequence, 335 residues long: Ferredoxin--NADP reductase (335 aa).

7 residues coordinate FAD: aspartate 34, glutamine 42, tyrosine 47, alanine 87, phenylalanine 121, aspartate 287, and threonine 328.

The protein belongs to the ferredoxin--NADP reductase type 2 family. Homodimer. The cofactor is FAD.

It carries out the reaction 2 reduced [2Fe-2S]-[ferredoxin] + NADP(+) + H(+) = 2 oxidized [2Fe-2S]-[ferredoxin] + NADPH. The chain is Ferredoxin--NADP reductase from Rickettsia felis (strain ATCC VR-1525 / URRWXCal2) (Rickettsia azadi).